Reading from the N-terminus, the 202-residue chain is Putative 3-methyladenine DNA glycosylase (202 aa).

Belongs to the DNA glycosylase MPG family.

This chain is Putative 3-methyladenine DNA glycosylase, found in Rhodopseudomonas palustris (strain BisB5).